A 360-amino-acid chain; its full sequence is DNA integrity scanning protein DisA (360 aa).

In terms of domain architecture, DAC spans Glu-11 to Ile-149. ATP contacts are provided by residues Gly-78, Leu-96, and Met-109 to Thr-113.

This sequence belongs to the DisA family. Homooligomer. Interacts with RadA. Mg(2+) is required as a cofactor.

The protein resides in the cytoplasm. The enzyme catalyses 2 ATP = 3',3'-c-di-AMP + 2 diphosphate. With respect to regulation, diadenylate cyclase (DAC) activity is inhibited 2-fold by Holliday junction (HJ) DNA, further addition of RecG inhibits DAC activity 11-fold; RecG may relocate DisA from the HJ. DAC is inhibited by the interaction with RadA. Diadenylate cyclase activity is not affected by ssDNA or dsDNA, but three- and four-way junctions strongly inhibit the activity of DisA, suggesting the enzyme is regulated by branched nucleic acids. Its function is as follows. Participates in a DNA-damage check-point that is active prior to asymmetric division when DNA is damaged. Forms globular foci that rapidly scan along the chromosomes during sporulation, searching for lesions. Its ability to scan through the chromosome rapidly is due to its non-specific DNA-binding. When a lesion is present, DisA pauses at the lesion site. This triggers a cellular response that culminates in a temporary block in sporulation initiation. It is required, at least partially, to inhibit the activity of the transcription factor spo0A, which controls, among others, early sporulation genes. In B.subtilis c-di-AMP is a second messenger that mediates growth, DNA repair and cell wall homeostasis; it is toxic when present in excess. Limits the replication fork reggression activity of RecG; DisA inhibits the ATPase activity of RecG. By limiting RecG-mediated fork regression, DisA provides time for removal of potentially lethal DNA lesions. In terms of biological role, one of 3 paralogous diadenylate cyclases (DAC) in this bacteria. Has diadenylate cyclase activity, catalyzing the condensation of 2 ATP molecules into cyclic di-AMP (c-di-AMP). c-di-AMP acts as a signaling molecule that couples DNA integrity with progression of sporulation. The rise in c-di-AMP level generated by DisA while scanning the chromosome operates as a positive signal that advances sporulation; upon encountering a lesion, the DisA focus arrests at the damaged site and halts c-di-AMP synthesis. Does not convert GTP to c-di-GMP. The polypeptide is DNA integrity scanning protein DisA (Bacillus subtilis (strain 168)).